We begin with the raw amino-acid sequence, 314 residues long: Ribosomal RNA small subunit methyltransferase H (314 aa).

S-adenosyl-L-methionine is bound by residues 34-36 (GGH), aspartate 53, phenylalanine 82, aspartate 103, and glutamine 110.

The protein belongs to the methyltransferase superfamily. RsmH family.

It localises to the cytoplasm. The catalysed reaction is cytidine(1402) in 16S rRNA + S-adenosyl-L-methionine = N(4)-methylcytidine(1402) in 16S rRNA + S-adenosyl-L-homocysteine + H(+). Specifically methylates the N4 position of cytidine in position 1402 (C1402) of 16S rRNA. In Limosilactobacillus fermentum (strain NBRC 3956 / LMG 18251) (Lactobacillus fermentum), this protein is Ribosomal RNA small subunit methyltransferase H.